Consider the following 307-residue polypeptide: MDIETFLAGERAAGGYRCGFVAIVGRPNVGKSTLMNHLIGQKISITSKKAQTTRNRVTGIYTDDTAQFVFVDTPGFQTDHRNALNDRLNQNVTEALGGVDVVVFVVEAMRFTDADRVVLKQLPKHTPVILVVNKIDKDKAKDRYALEAFVAQVRAEFEFAAAEAVSAKHGLRIANLLELIKPYLPESVPMYPEDMVTDKSARFLAMEIVREKLFRYLGEELPYAMNVEVEQFEEEDGLNRIYIAVLVDKESQKAILIGKGGERLKKISTEARLDMEKLFDTKVFLKVWVKVKSGWADDIRFLRELGL.

The 170-residue stretch at 17–186 (RCGFVAIVGR…LELIKPYLPE (170 aa)) folds into the Era-type G domain. The segment at 25-32 (GRPNVGKS) is G1. 25–32 (GRPNVGKS) provides a ligand contact to GTP. A G2 region spans residues 51–55 (QTTRN). The interval 72-75 (DTPG) is G3. GTP contacts are provided by residues 72-76 (DTPGF) and 133-136 (NKID). The tract at residues 133–136 (NKID) is G4. The interval 165–167 (VSA) is G5. The KH type-2 domain maps to 217–293 (LGEELPYAMN…FLKVWVKVKS (77 aa)).

Belongs to the TRAFAC class TrmE-Era-EngA-EngB-Septin-like GTPase superfamily. Era GTPase family. As to quaternary structure, monomer.

Its subcellular location is the cytoplasm. It localises to the cell inner membrane. Functionally, an essential GTPase that binds both GDP and GTP, with rapid nucleotide exchange. Plays a role in 16S rRNA processing and 30S ribosomal subunit biogenesis and possibly also in cell cycle regulation and energy metabolism. The protein is GTPase Era of Neisseria meningitidis serogroup B (strain ATCC BAA-335 / MC58).